Consider the following 128-residue polypeptide: Large ribosomal subunit protein bL20 (128 aa).

It belongs to the bacterial ribosomal protein bL20 family.

Binds directly to 23S ribosomal RNA and is necessary for the in vitro assembly process of the 50S ribosomal subunit. It is not involved in the protein synthesizing functions of that subunit. This is Large ribosomal subunit protein bL20 from Micrococcus luteus (strain ATCC 4698 / DSM 20030 / JCM 1464 / CCM 169 / CCUG 5858 / IAM 1056 / NBRC 3333 / NCIMB 9278 / NCTC 2665 / VKM Ac-2230) (Micrococcus lysodeikticus).